A 212-amino-acid chain; its full sequence is Peroxisomal membrane protein 4 (212 aa).

The next 2 helical transmembrane spans lie at 97–117 (GGTH…LLFG) and 151–171 (LKWD…LWLF). N206 is a glycosylation site (N-linked (GlcNAc...) asparagine).

Belongs to the peroxisomal membrane protein PXMP2/4 family. As to quaternary structure, interacts with PEX19. In terms of tissue distribution, liver.

Its subcellular location is the peroxisome membrane. The protein is Peroxisomal membrane protein 4 (Pxmp4) of Rattus norvegicus (Rat).